The primary structure comprises 573 residues: Urease subunit alpha 2 (573 aa).

Positions 135 to 573 constitute a Urease domain; the sequence is GGMDTHVHYI…ISLNQLYFFS (439 aa). Histidine 140, histidine 142, and lysine 223 together coordinate Ni(2+). Lysine 223 is subject to N6-carboxylysine. Histidine 225 contributes to the substrate binding site. Ni(2+)-binding residues include histidine 252 and histidine 278. The Proton donor role is filled by histidine 326. Aspartate 366 contributes to the Ni(2+) binding site.

This sequence belongs to the metallo-dependent hydrolases superfamily. Urease alpha subunit family. In terms of assembly, heterotrimer of UreA (gamma), UreB (beta) and UreC (alpha) subunits. Three heterotrimers associate to form the active enzyme. Ni cation serves as cofactor. Post-translationally, carboxylation allows a single lysine to coordinate two nickel ions.

It localises to the cytoplasm. The catalysed reaction is urea + 2 H2O + H(+) = hydrogencarbonate + 2 NH4(+). It functions in the pathway nitrogen metabolism; urea degradation; CO(2) and NH(3) from urea (urease route): step 1/1. Functionally, disrupting the ure2 operon has no effect on urease activity or pathogen survival in BALB/c mice when administered orally. This is Urease subunit alpha 2 from Brucella abortus (strain 2308).